The primary structure comprises 89 residues: Large ribosomal subunit protein uL23c (89 aa).

This sequence belongs to the universal ribosomal protein uL23 family. As to quaternary structure, part of the 50S ribosomal subunit.

The protein localises to the plastid. The protein resides in the chloroplast. Binds to 23S rRNA. The protein is Large ribosomal subunit protein uL23c (rpl23) of Staurastrum punctulatum (Green alga).